Reading from the N-terminus, the 492-residue chain is Forkhead box protein O6 (492 aa).

Disordered regions lie at residues 1 to 76, 163 to 235, 315 to 338, and 466 to 492; these read MAAK…EVGP, SWWM…ASPA, GAGL…APRP, and FNFD…WVPG. A DNA-binding region (fork-head) is located at residues 88–182; sequence WGNLSYADLI…KTGKTPRRRA (95 aa). Serine 184 carries the post-translational modification Phosphoserine. Over residues 192-203 the composition is skewed to basic residues; that stretch reads LRIKGKASKKKQ. Low complexity predominate over residues 225-235; it reads PAAAKWAASPA. Over residues 472–486 the composition is skewed to pro residues; the sequence is LPPPPPGLAGAPPPN.

Phosphorylation of Ser-184 is be important in regulating the transacriptional activity.

Its subcellular location is the cytoplasm. The protein localises to the nucleus. Functionally, transcriptional activator. The polypeptide is Forkhead box protein O6 (FOXO6) (Homo sapiens (Human)).